A 360-amino-acid chain; its full sequence is Peptide chain release factor 1 (360 aa).

Position 237 is an N5-methylglutamine (glutamine 237).

Belongs to the prokaryotic/mitochondrial release factor family. Methylated by PrmC. Methylation increases the termination efficiency of RF1.

The protein resides in the cytoplasm. Its function is as follows. Peptide chain release factor 1 directs the termination of translation in response to the peptide chain termination codons UAG and UAA. This chain is Peptide chain release factor 1, found in Pseudomonas putida (strain W619).